A 265-amino-acid chain; its full sequence is Shikimate dehydrogenase (NADP(+)) (265 aa).

Residues 15–17 and threonine 62 each bind shikimate; that span reads SLS. Lysine 66 serves as the catalytic Proton acceptor. Shikimate-binding residues include asparagine 87 and aspartate 102. Residues 125 to 129, 149 to 154, and leucine 209 each bind NADP(+); these read GAGGA and NRTLEK. Tyrosine 211 is a shikimate binding site. Glycine 233 contributes to the NADP(+) binding site.

The protein belongs to the shikimate dehydrogenase family. As to quaternary structure, homodimer.

It carries out the reaction shikimate + NADP(+) = 3-dehydroshikimate + NADPH + H(+). It participates in metabolic intermediate biosynthesis; chorismate biosynthesis; chorismate from D-erythrose 4-phosphate and phosphoenolpyruvate: step 4/7. In terms of biological role, involved in the biosynthesis of the chorismate, which leads to the biosynthesis of aromatic amino acids. Catalyzes the reversible NADPH linked reduction of 3-dehydroshikimate (DHSA) to yield shikimate (SA). This is Shikimate dehydrogenase (NADP(+)) from Legionella pneumophila (strain Lens).